The chain runs to 239 residues: Phosphoglycolate phosphatase (239 aa).

Aspartate 14 serves as the catalytic Nucleophile. Positions 14 and 16 each coordinate Mg(2+). Lysine 160 contacts substrate. Mg(2+) is bound by residues aspartate 183 and aspartate 187.

Belongs to the archaeal SPP-like hydrolase family. The cofactor is Mg(2+).

It catalyses the reaction 2-phosphoglycolate + H2O = glycolate + phosphate. In terms of biological role, catalyzes the dephosphorylation of 2-phosphoglycolate. The sequence is that of Phosphoglycolate phosphatase from Aeropyrum pernix (strain ATCC 700893 / DSM 11879 / JCM 9820 / NBRC 100138 / K1).